We begin with the raw amino-acid sequence, 179 residues long: Large ribosomal subunit protein uL5 (179 aa).

The protein belongs to the universal ribosomal protein uL5 family. Part of the 50S ribosomal subunit; part of the 5S rRNA/L5/L18/L25 subcomplex. Contacts the 5S rRNA and the P site tRNA. Forms a bridge to the 30S subunit in the 70S ribosome.

This is one of the proteins that bind and probably mediate the attachment of the 5S RNA into the large ribosomal subunit, where it forms part of the central protuberance. In the 70S ribosome it contacts protein S13 of the 30S subunit (bridge B1b), connecting the 2 subunits; this bridge is implicated in subunit movement. Contacts the P site tRNA; the 5S rRNA and some of its associated proteins might help stabilize positioning of ribosome-bound tRNAs. This Paramagnetospirillum magneticum (strain ATCC 700264 / AMB-1) (Magnetospirillum magneticum) protein is Large ribosomal subunit protein uL5.